Here is a 90-residue protein sequence, read N- to C-terminus: Small ribosomal subunit protein uS17 (90 aa).

This sequence belongs to the universal ribosomal protein uS17 family. As to quaternary structure, part of the 30S ribosomal subunit.

Functionally, one of the primary rRNA binding proteins, it binds specifically to the 5'-end of 16S ribosomal RNA. This chain is Small ribosomal subunit protein uS17, found in Treponema denticola (strain ATCC 35405 / DSM 14222 / CIP 103919 / JCM 8153 / KCTC 15104).